Consider the following 357-residue polypeptide: Phospho-N-acetylmuramoyl-pentapeptide-transferase (357 aa).

A run of 10 helical transmembrane segments spans residues 4–24 (QILF…PLLI), 52–72 (TMGG…SKVI), 77–97 (PTFS…VGFL), 115–135 (AKMA…LQFA), 153–173 (FGWT…ILAM), 186–206 (LATG…VWQF), 228–248 (PLDL…FLWW), 255–275 (IFMG…LAIC), 280–300 (LLVA…VIQV), and 334–354 (FWII…AGWA).

Belongs to the glycosyltransferase 4 family. MraY subfamily. Requires Mg(2+) as cofactor.

Its subcellular location is the cell membrane. It carries out the reaction UDP-N-acetyl-alpha-D-muramoyl-L-alanyl-gamma-D-glutamyl-meso-2,6-diaminopimeloyl-D-alanyl-D-alanine + di-trans,octa-cis-undecaprenyl phosphate = di-trans,octa-cis-undecaprenyl diphospho-N-acetyl-alpha-D-muramoyl-L-alanyl-D-glutamyl-meso-2,6-diaminopimeloyl-D-alanyl-D-alanine + UMP. It participates in cell wall biogenesis; peptidoglycan biosynthesis. Catalyzes the initial step of the lipid cycle reactions in the biosynthesis of the cell wall peptidoglycan: transfers peptidoglycan precursor phospho-MurNAc-pentapeptide from UDP-MurNAc-pentapeptide onto the lipid carrier undecaprenyl phosphate, yielding undecaprenyl-pyrophosphoryl-MurNAc-pentapeptide, known as lipid I. The sequence is that of Phospho-N-acetylmuramoyl-pentapeptide-transferase from Streptomyces avermitilis (strain ATCC 31267 / DSM 46492 / JCM 5070 / NBRC 14893 / NCIMB 12804 / NRRL 8165 / MA-4680).